A 369-amino-acid chain; its full sequence is Endophilin-A (369 aa).

A BAR domain is found at 18–248 (TEKMGGAEGT…LQEKRAEAES (231 aa)). Residues 227–249 (QCADVLRGLQETLQEKRAEAESR) are a coiled coil. The span at 275 to 294 (GTPSHISSSASPLPSPMRSP) shows a compositional bias: low complexity. The segment at 275–297 (GTPSHISSSASPLPSPMRSPAKS) is disordered. The SH3 domain occupies 305–364 (QQQPCCQALYDFDPENPGELGFKENDIITLLNRVDDNWYEGAVNGRTGYFPQSYVQVQVP).

This sequence belongs to the endophilin family.

The protein localises to the cytoplasm. It is found in the membrane. Functionally, required presynaptically at the neuromuscular junction. Implicated in synaptic vesicle endocytosis. This chain is Endophilin-A, found in Drosophila virilis (Fruit fly).